Consider the following 82-residue polypeptide: Precursor of CEP3 (82 aa).

The first 24 residues, 1–24 (MATINVYVFAFIFLLTISVGSIEG), serve as a signal peptide directing secretion. Residues 25-63 (RKLTKFTVTTSEEIRAGGSVLSSSPPTEPLESPPSHGVD) constitute a propeptide that is removed on maturation. The disordered stretch occupies residues 40–82 (AGGSVLSSSPPTEPLESPPSHGVDTFRPTEPGHSPGIGHSVHN). 3 positions are modified to hydroxyproline: proline 67, proline 70, and proline 74. Positions 79–82 (SVHN) are excised as a propeptide.

Belongs to the C-terminally encoded plant signaling peptide (CEP) family. Interacts with the CEP receptor CEPR1. The mature small signaling peptide is generated by proteolytic processing of the longer precursor. In terms of tissue distribution, mostly expressed in roots. Present in lateral roots (especially in vasculature), root-hypocotyl junction and cotyledons.

The protein localises to the secreted. Its subcellular location is the extracellular space. It localises to the apoplast. In terms of biological role, extracellular signaling peptide that represses primary root growth rate and significantly inhibits lateral root formation. Promotes shoot growth. Modulates leaf morphology. Regulates systemic nitrogen (N)-demand signaling. Mediates systemic up-regulation of genes involved in N uptake and assimilation pathways. In Arabidopsis thaliana (Mouse-ear cress), this protein is Precursor of CEP3.